A 744-amino-acid polypeptide reads, in one-letter code: NAD(P)H-quinone oxidoreductase subunit 5, chloroplastic (744 aa).

Transmembrane regions (helical) follow at residues 9 to 29 (WIIP…LLLF), 40 to 60 (WAFQ…NLSI), 89 to 109 (IDPL…MVLI), 125 to 145 (FAYM…SNLI), 147 to 167 (IYIF…FWFT), 185 to 205 (GDFG…SFEF), 219 to 239 (NEVN…GAIA), 258 to 278 (TPIS…FLVA), 290 to 312 (IMNF…ALAQ), 327 to 347 (LGYM…FHLI), 354 to 374 (ALLF…VGYC), 396 to 416 (TSFL…CFWS), 425 to 445 (WLYS…TAFY), 549 to 569 (LFPI…GIPF), 608 to 628 (VFSV…YKPV), and 724 to 744 (YLFF…FLNF).

Belongs to the complex I subunit 5 family. In terms of assembly, NDH is composed of at least 16 different subunits, 5 of which are encoded in the nucleus.

The protein localises to the plastid. The protein resides in the chloroplast thylakoid membrane. The catalysed reaction is a plastoquinone + NADH + (n+1) H(+)(in) = a plastoquinol + NAD(+) + n H(+)(out). The enzyme catalyses a plastoquinone + NADPH + (n+1) H(+)(in) = a plastoquinol + NADP(+) + n H(+)(out). In terms of biological role, NDH shuttles electrons from NAD(P)H:plastoquinone, via FMN and iron-sulfur (Fe-S) centers, to quinones in the photosynthetic chain and possibly in a chloroplast respiratory chain. The immediate electron acceptor for the enzyme in this species is believed to be plastoquinone. Couples the redox reaction to proton translocation, and thus conserves the redox energy in a proton gradient. The sequence is that of NAD(P)H-quinone oxidoreductase subunit 5, chloroplastic (ndhF) from Adenocaulon himalaicum (Trailplant).